A 181-amino-acid polypeptide reads, in one-letter code: GTPase RhebL1 (181 aa).

GTP is bound by residues L30–T36, G61, N117–D120, and S147–A148. Residues Y33–Y41 carry the Effector region motif. T36 contacts Mg(2+). C178 bears the Cysteine methyl ester mark. C178 is lipidated: S-farnesyl cysteine. A propeptide spans H179–M181 (removed in mature form).

This sequence belongs to the small GTPase superfamily. Rheb family. In terms of assembly, interacts with MTOR.

Its subcellular location is the endomembrane system. It is found in the cytoplasm. The enzyme catalyses GTP + H2O = GDP + phosphate + H(+). Binds GTP and exhibits intrinsic GTPase activity. May activate NF-kappa-B-mediated gene transcription. Promotes signal transduction through MTOR, activates RPS6KB1, and is a downstream target of the small GTPase-activating proteins TSC1 and TSC2. The protein is GTPase RhebL1 (RHEBL1) of Bos taurus (Bovine).